We begin with the raw amino-acid sequence, 291 residues long: Probable 2-(5''-triphosphoribosyl)-3'-dephosphocoenzyme-A synthase (291 aa).

It belongs to the CitG/MdcB family.

The enzyme catalyses 3'-dephospho-CoA + ATP = 2'-(5''-triphospho-alpha-D-ribosyl)-3'-dephospho-CoA + adenine. Involved in the formation of 2-(5''-phosphoribosyl)-3'-dephosphocoenzyme-A, the prosthetic group of the acyl-carrier protein of the malonate decarboxylase. The sequence is that of Probable 2-(5''-triphosphoribosyl)-3'-dephosphocoenzyme-A synthase from Pseudomonas fluorescens (strain ATCC BAA-477 / NRRL B-23932 / Pf-5).